The sequence spans 558 residues: UvrABC system protein C (558 aa).

One can recognise a GIY-YIG domain in the interval 12-92 (LLPGVYIFYG…IFNHKPKYNV (81 aa)). Residues 200 to 235 (SETLDLIEEKMKKHAKMMDFENAAKYRDLLVKFENV) form the UVR domain.

This sequence belongs to the UvrC family. In terms of assembly, interacts with UvrB in an incision complex.

It localises to the cytoplasm. In terms of biological role, the UvrABC repair system catalyzes the recognition and processing of DNA lesions. UvrC both incises the 5' and 3' sides of the lesion. The N-terminal half is responsible for the 3' incision and the C-terminal half is responsible for the 5' incision. The protein is UvrABC system protein C of Pseudothermotoga lettingae (strain ATCC BAA-301 / DSM 14385 / NBRC 107922 / TMO) (Thermotoga lettingae).